A 170-amino-acid polypeptide reads, in one-letter code: Aspartate 1-decarboxylase (170 aa).

S25 (schiff-base intermediate with substrate; via pyruvic acid) is an active-site residue. S25 carries the post-translational modification Pyruvic acid (Ser). T57 is a binding site for substrate. The active-site Proton donor is the Y58. G73–A75 contacts substrate. The disordered stretch occupies residues G118–R170.

It belongs to the PanD family. In terms of assembly, heterooctamer of four alpha and four beta subunits. Pyruvate serves as cofactor. Post-translationally, is synthesized initially as an inactive proenzyme, which is activated by self-cleavage at a specific serine bond to produce a beta-subunit with a hydroxyl group at its C-terminus and an alpha-subunit with a pyruvoyl group at its N-terminus.

The protein localises to the cytoplasm. The enzyme catalyses L-aspartate + H(+) = beta-alanine + CO2. It participates in cofactor biosynthesis; (R)-pantothenate biosynthesis; beta-alanine from L-aspartate: step 1/1. Functionally, catalyzes the pyruvoyl-dependent decarboxylation of aspartate to produce beta-alanine. This is Aspartate 1-decarboxylase from Frankia alni (strain DSM 45986 / CECT 9034 / ACN14a).